The sequence spans 230 residues: Thymidylate kinase (230 aa).

20–27 is an ATP binding site; it reads GGEGSGKS.

It belongs to the thymidylate kinase family.

It catalyses the reaction dTMP + ATP = dTDP + ADP. In terms of biological role, phosphorylation of dTMP to form dTDP in both de novo and salvage pathways of dTTP synthesis. The sequence is that of Thymidylate kinase from Nitrobacter winogradskyi (strain ATCC 25391 / DSM 10237 / CIP 104748 / NCIMB 11846 / Nb-255).